The primary structure comprises 917 residues: MTPDKDAPLREDIRLLGRLLGDTVRDQQGAASFDLIERIRQTSVRFRRDEDLAARRELEDTLDALSREQTIQVVRAFSYFSHLANIAEDQHHIRRSRAHLLAGSAPREGSLAHAVGHALDEQRLDPTDLAAFFDTALISPVLTAHPTEVQRKSILNCQTVIARLLDERDRMQLTPDEAEANLDALRRAVLTLWQTRMLRPAKLSVIDEVNNGLSYFETTFLRELPRLYAALEDRLAGAQPALANHELPAFLQVGSWIGGDRDGNPYVTADVLEEALAMQARVALDYYLDELHTLGSQLSLSQGLVGASDALLALADRSPDQSPHRSDEPYRRAIAGIYARLSATYRNLLGHPPARHAVAEAEPYADVAALADDLDTLHRSLVANGTAALARGRLRHLRRAVRVFGFHLAPIDLRQNSDVHERVVAELLEVARPGAAYLAQDEAGRCALLLDELATARPLASPHVRYSDDSEGELAIFRAARRAHLRYGRGAIHNCIISKTDDLSDLLELAVLLKEAGLLRPLEKALDVNIVPLFETIGDLENAAGVMDRLFSIPVYRELLAARDQTQEVMLGYSDSNKDGGFLTSGWALYKAEGELVEVFGRHGVRLRLFHGRGGSVGRGGGPSYQAILAQPDGAVQGQIRLTEQGEVIAAKYGNPEVGRRNLEVLVAATLETSLRRDGGDATPRTFLDTMQALSDAAFTCYRGLVYETPGFEQYFWESTVISEIAGLNIGSRPASRKKGTRIDDLRAIPWVFSWSQCRLMLPGWFGFGSAVKQWLAAHPKDGLGLLQRMYREWSFFATLLSNMDMVLSKTDLAIASRYAELVKDPVLRDSIFERIRSEWKDTVDALLAITEQVELLDANPLLKRSIRNRFPYLDPLNHVQVELLRRHREGNGEDARIRNGIHISINGIAAGLRNSG.

Active-site residues include His-145 and Lys-578.

The protein belongs to the PEPCase type 1 family. Requires Mg(2+) as cofactor.

It carries out the reaction oxaloacetate + phosphate = phosphoenolpyruvate + hydrogencarbonate. In terms of biological role, forms oxaloacetate, a four-carbon dicarboxylic acid source for the tricarboxylic acid cycle. The chain is Phosphoenolpyruvate carboxylase from Azoarcus sp. (strain BH72).